The chain runs to 152 residues: Transcriptional repressor NrdR (152 aa).

The segment at cysteine 3–cysteine 34 is a zinc-finger region. The ATP-cone domain maps to leucine 49–arginine 139.

This sequence belongs to the NrdR family. Zn(2+) serves as cofactor.

Functionally, negatively regulates transcription of bacterial ribonucleotide reductase nrd genes and operons by binding to NrdR-boxes. The protein is Transcriptional repressor NrdR of Heliobacterium modesticaldum (strain ATCC 51547 / Ice1).